A 132-amino-acid chain; its full sequence is Ribonuclease VapC (132 aa).

Residues 4 to 123 (YMLDTNIVIY…SNNLREFERV (120 aa)) enclose the PINc domain. The Mg(2+) site is built by Asp-7 and Asp-98.

Belongs to the PINc/VapC protein family. Probably forms a complex with cognate antitoxin VapB2. The cofactor is Mg(2+).

Toxic component of a type II toxin-antitoxin (TA) system. Acts as an RNase. Its toxic effect is neutralized by cognate antitoxin VapB2 but not by non-cognate antitoxin VapB1. This is Ribonuclease VapC from Haemophilus influenzae (strain 86-028NP).